A 760-amino-acid chain; its full sequence is Metal transporter cnnm-2 (760 aa).

The signal sequence occupies residues 1–21 (MIIKVFLRLLLLCAHIVCIDG). The Extracellular portion of the chain corresponds to 22–153 (KLEIRPVVSG…ETFMPVWAQC (132 aa)). Asparagine 88 carries an N-linked (GlcNAc...) asparagine glycan. Residues 145-323 (TFMPVWAQCA…MENDACDIDL (179 aa)) form the CNNM transmembrane domain. The chain crosses the membrane as a helical span at residues 154–174 (AILCLLFSISALCSGLTLGLM). Over 175 to 208 (ALTPQELSILMKSGSQREKKHAAAIYPIRCHGNR) the chain is Cytoplasmic. The chain crosses the membrane as a helical span at residues 209–229 (LLCTVIIMNVIVNTGITLLFD). Position 230 (aspartate 230) is a topological domain, extracellular. Residues 231-251 (LAEGLIAFVASTVGIVVFGEI) form a helical membrane-spanning segment. The Cytoplasmic segment spans residues 252 to 261 (LPQSICVKYG). Residues 262–282 (LAVGANTIFITKFFMFLLFPI) traverse the membrane as a helical segment. At 283–760 (TWPLGKILDK…SVEELKPLME (478 aa)) the chain is on the extracellular side. Residues asparagine 302 and asparagine 403 are each glycosylated (N-linked (GlcNAc...) asparagine). 2 CBS domains span residues 344–406 (MTDI…NITV) and 442–512 (MVAK…ITDE). 3 N-linked (GlcNAc...) asparagine glycosylation sites follow: asparagine 528, asparagine 592, and asparagine 667. The segment at 708–734 (DDFGSPTRKASILDSSPNSRKRSSTSV) is disordered.

It belongs to the ACDP family.

The protein resides in the cell membrane. Its function is as follows. Probable metal transporter. Probably acts redundantly with the other metal transport proteins cnnm-1, cnnm-3, cnnm-4 and cnnm-5 to regulate Mg(2+) homeostasis. This chain is Metal transporter cnnm-2, found in Caenorhabditis elegans.